Reading from the N-terminus, the 1065-residue chain is Outer capsid protein VP3 (1065 aa).

The protein localises to the virion. It carries out the reaction a 5'-end diphospho-ribonucleoside in mRNA + GTP + H(+) = a 5'-end (5'-triphosphoguanosine)-ribonucleoside in mRNA + diphosphate. It catalyses the reaction a 5'-end (5'-triphosphoguanosine)-ribonucleoside in mRNA + S-adenosyl-L-methionine = a 5'-end (N(7)-methyl 5'-triphosphoguanosine)-ribonucleoside in mRNA + S-adenosyl-L-homocysteine. Outer capsid protein involved in mRNA capping. Catalyzes the last 3 enzymatic activities for formation of the 5' cap structure on the viral plus-strand transcripts, namely the RNA guanylyltransferase, RNA-7N- and RNA-2'O-methyltransferase activities. This is Outer capsid protein VP3 (S3) from Cryphonectria parasitica mycoreovirus 1 (strain 9B21) (CpMYRV-1).